The primary structure comprises 288 residues: Leucine-rich repeat-containing protein 72 (288 aa).

4 LRR repeats span residues 47 to 68 (DVFE…SRFK), 69 to 90 (KLKY…TRNY), 91 to 112 (CLAE…HYLP), and 113 to 134 (SLHI…VKEL). Positions 148–186 (NPLCQYNLYRLYIIYHLPGVELLDRNQVTEKERRSMITL) constitute an LRRCT domain.

In Bos taurus (Bovine), this protein is Leucine-rich repeat-containing protein 72 (LRRC72).